Consider the following 403-residue polypeptide: Phosphopentomutase (403 aa).

Mn(2+) is bound by residues Asp13, Asp298, His303, Asp339, His340, and His351.

Belongs to the phosphopentomutase family. Requires Mn(2+) as cofactor.

The protein localises to the cytoplasm. The catalysed reaction is 2-deoxy-alpha-D-ribose 1-phosphate = 2-deoxy-D-ribose 5-phosphate. It carries out the reaction alpha-D-ribose 1-phosphate = D-ribose 5-phosphate. The protein operates within carbohydrate degradation; 2-deoxy-D-ribose 1-phosphate degradation; D-glyceraldehyde 3-phosphate and acetaldehyde from 2-deoxy-alpha-D-ribose 1-phosphate: step 1/2. Isomerase that catalyzes the conversion of deoxy-ribose 1-phosphate (dRib-1-P) and ribose 1-phosphate (Rib-1-P) to deoxy-ribose 5-phosphate (dRib-5-P) and ribose 5-phosphate (Rib-5-P), respectively. This is Phosphopentomutase from Streptococcus uberis (strain ATCC BAA-854 / 0140J).